The sequence spans 108 residues: Putative membrane protein insertion efficiency factor (108 aa).

It belongs to the UPF0161 family.

The protein localises to the cell inner membrane. Functionally, could be involved in insertion of integral membrane proteins into the membrane. The sequence is that of Putative membrane protein insertion efficiency factor from Chelativorans sp. (strain BNC1).